The following is a 440-amino-acid chain: Chromosomal replication initiator protein DnaA (440 aa).

Residues 1–74 are domain I, interacts with DnaA modulators; sequence MNPSQILENL…VQSGNKAIIN (74 aa). The tract at residues 74–99 is domain II; sequence NIQAQSAKQSNKSTKIDIAHIKAQST. Positions 100–316 are domain III, AAA+ region; sequence ILNPSFTFDS…GIIISLNAYA (217 aa). Residues Gly146, Gly148, Lys149, and Thr150 each coordinate ATP. The tract at residues 317 to 440 is domain IV, binds dsDNA; sequence TILGQEITLE…KNKILVKSQS (124 aa).

It belongs to the DnaA family. In terms of assembly, oligomerizes as a right-handed, spiral filament on DNA at oriC.

It is found in the cytoplasm. In terms of biological role, plays an essential role in the initiation and regulation of chromosomal replication. ATP-DnaA binds to the origin of replication (oriC) to initiate formation of the DNA replication initiation complex once per cell cycle. Binds the DnaA box (a 9 base pair repeat at the origin) and separates the double-stranded (ds)DNA. Forms a right-handed helical filament on oriC DNA; dsDNA binds to the exterior of the filament while single-stranded (ss)DNA is stabiized in the filament's interior. The ATP-DnaA-oriC complex binds and stabilizes one strand of the AT-rich DNA unwinding element (DUE), permitting loading of DNA polymerase. After initiation quickly degrades to an ADP-DnaA complex that is not apt for DNA replication. Binds acidic phospholipids. The polypeptide is Chromosomal replication initiator protein DnaA (Campylobacter jejuni subsp. jejuni serotype O:23/36 (strain 81-176)).